The sequence spans 149 residues: Nucleoside diphosphate kinase (149 aa).

6 residues coordinate ATP: Lys9, Phe57, Arg85, Thr91, Arg102, and Asn112. The active-site Pros-phosphohistidine intermediate is the His115.

Belongs to the NDK family. Homotetramer. Requires Mg(2+) as cofactor.

It localises to the cytoplasm. The catalysed reaction is dZDP + ATP = dZTP + ADP. It catalyses the reaction a 2'-deoxyribonucleoside 5'-diphosphate + ATP = a 2'-deoxyribonucleoside 5'-triphosphate + ADP. The enzyme catalyses a ribonucleoside 5'-diphosphate + ATP = a ribonucleoside 5'-triphosphate + ADP. It participates in purine metabolism. Its function is as follows. Major role in the synthesis of nucleoside triphosphates other than ATP. The ATP gamma phosphate is transferred to the NDP beta phosphate via a ping-pong mechanism, using a phosphorylated active-site intermediate. In terms of biological role, (Microbial infection) Catalyzes the phosphorylation of dZDP to dZTP, when the bacterium is infected by a phage that produces the substrate for the synthesis of dZTP (2- amino-2'-deoxyadenosine 5'-triphosphate), which is then used by the phage as a DNA polymerase substrate. The protein is Nucleoside diphosphate kinase of Synechococcus sp. (strain JA-3-3Ab) (Cyanobacteria bacterium Yellowstone A-Prime).